Reading from the N-terminus, the 74-residue chain is Histone H1.C8/H1.M1 (74 aa).

Residues 1–74 (MSDAAVPPKK…KAVKKAPKKK (74 aa)) form a disordered region. The segment covering 11 to 74 (ASPKKAAAKK…KAVKKAPKKK (64 aa)) has biased composition (basic residues).

The protein resides in the nucleus. The protein localises to the chromosome. The polypeptide is Histone H1.C8/H1.M1 (Trypanosoma cruzi).